We begin with the raw amino-acid sequence, 286 residues long: uncharacterized protein (286 aa).

The next 7 membrane-spanning stretches (helical) occupy residues 30–50, 68–88, 99–119, 136–156, 169–189, 205–225, and 254–274; these read LTFM…LTVQ, LSTI…VTAF, WFWA…GILL, IVYA…LSAL, LFHI…LSFI, IIPG…VYFV, and SALF…YFIL.

Its subcellular location is the cell membrane. This is an uncharacterized protein from Mycoplasma genitalium (strain ATCC 33530 / DSM 19775 / NCTC 10195 / G37) (Mycoplasmoides genitalium).